Consider the following 172-residue polypeptide: Protein/nucleic acid deglycase 2 (172 aa).

In terms of domain architecture, PfpI endopeptidase spans 3-171; the sequence is KKIAVLITDE…FNREALRLLG (169 aa). The Nucleophile role is filled by C104.

It belongs to the peptidase C56 family. As to quaternary structure, exists in monomeric, trimeric, and hexameric forms.

Its subcellular location is the cytoplasm. The catalysed reaction is N(omega)-(1-hydroxy-2-oxopropyl)-L-arginyl-[protein] + H2O = lactate + L-arginyl-[protein] + H(+). It catalyses the reaction N(6)-(1-hydroxy-2-oxopropyl)-L-lysyl-[protein] + H2O = lactate + L-lysyl-[protein] + H(+). The enzyme catalyses S-(1-hydroxy-2-oxopropyl)-L-cysteinyl-[protein] + H2O = lactate + L-cysteinyl-[protein] + H(+). It carries out the reaction N(omega)-(1-hydroxy-2-oxoethyl)-L-arginyl-[protein] + H2O = L-arginyl-[protein] + glycolate + H(+). The catalysed reaction is N(6)-(1-hydroxy-2-oxoethyl)-L-lysyl-[protein] + H2O = glycolate + L-lysyl-[protein] + H(+). It catalyses the reaction S-(1-hydroxy-2-oxoethyl)-L-cysteinyl-[protein] + H2O = glycolate + L-cysteinyl-[protein] + H(+). The enzyme catalyses N(2)-(1-hydroxy-2-oxopropyl)-dGTP + H2O = lactate + dGTP + H(+). It carries out the reaction N(2)-(1-hydroxy-2-oxopropyl)-GTP + H2O = lactate + GTP + H(+). The catalysed reaction is N(2)-(1-hydroxy-2-oxopropyl)-GDP + H2O = lactate + GDP + H(+). It catalyses the reaction N(2)-(1-hydroxy-2-oxopropyl)-GMP + H2O = lactate + GMP + H(+). The enzyme catalyses N(2)-(1-hydroxy-2-oxoethyl)-dGTP + H2O = dGTP + glycolate + H(+). It carries out the reaction N(2)-(1-hydroxy-2-oxoethyl)-GTP + H2O = glycolate + GTP + H(+). The catalysed reaction is N(2)-(1-hydroxy-2-oxoethyl)-GDP + H2O = glycolate + GDP + H(+). It catalyses the reaction N(2)-(1-hydroxy-2-oxoethyl)-GMP + H2O = glycolate + GMP + H(+). The enzyme catalyses an N(2)-(1-hydroxy-2-oxopropyl)-guanosine in RNA + H2O = a guanosine in RNA + lactate + H(+). It carries out the reaction an N(2)-(1-hydroxy-2-oxopropyl)-2'-deoxyguanosine in DNA + H2O = a 2'-deoxyguanosine in DNA + lactate + H(+). The catalysed reaction is an N(2)-(1-hydroxy-2-oxoethyl)-guanosine in RNA + H2O = a guanosine in RNA + glycolate + H(+). It catalyses the reaction an N(2)-(1-hydroxy-2-oxoethyl)-2'-deoxyguanosine in DNA + H2O = a 2'-deoxyguanosine in DNA + glycolate + H(+). Its activity is regulated as follows. Glyoxalase activity is inhibited by zinc ions at pH 7.0. Protein and nucleotide deglycase that catalyzes the deglycation of the Maillard adducts formed between amino groups of proteins or nucleotides and reactive carbonyl groups of glyoxals. Thus, functions as a protein deglycase that repairs methylglyoxal- and glyoxal-glycated proteins, and releases repaired proteins and lactate or glycolate, respectively. Deglycates cysteine, arginine and lysine residues in proteins, and thus reactivates these proteins by reversing glycation by glyoxals. Is able to repair glycated serum albumin, collagen, glyceraldehyde-3-phosphate dehydrogenase, and fructose biphosphate aldolase. Acts on early glycation intermediates (hemithioacetals and aminocarbinols), preventing the formation of advanced glycation endproducts (AGE) that cause irreversible damage. Also functions as a nucleotide deglycase able to repair glycated guanine in the free nucleotide pool (GTP, GDP, GMP, dGTP) and in DNA and RNA. Is thus involved in a major nucleotide repair system named guanine glycation repair (GG repair), dedicated to reversing methylglyoxal and glyoxal damage via nucleotide sanitization and direct nucleic acid repair. In vitro, prevents acrylamide formation in asparagine/glyoxal and asparagine/sugar mixtures at 55 degrees Celsius, likely by degrading asparagine/glyoxal Maillard adducts formed at high temperatures. Also displays an apparent glyoxalase activity that in fact reflects its deglycase activity. Is a general stress protein; is required for the protection of bacterial cells against many environmental stresses, including oxidative, thermal, osmotic, UV, and pH stresses. And plays an important role in protection against electrophile/carbonyl stress. The protein is Protein/nucleic acid deglycase 2 (yhbO) of Escherichia coli (strain K12).